We begin with the raw amino-acid sequence, 551 residues long: Dihydroxy-acid dehydratase (551 aa).

Asp78 serves as a coordination point for Mg(2+). Cys119 contributes to the [2Fe-2S] cluster binding site. 2 residues coordinate Mg(2+): Asp120 and Lys121. Residue Lys121 is modified to N6-carboxylysine. Position 191 (Cys191) interacts with [2Fe-2S] cluster. Glu441 contributes to the Mg(2+) binding site. Catalysis depends on Ser467, which acts as the Proton acceptor.

This sequence belongs to the IlvD/Edd family. In terms of assembly, homodimer. It depends on [2Fe-2S] cluster as a cofactor. Mg(2+) is required as a cofactor.

The enzyme catalyses (2R)-2,3-dihydroxy-3-methylbutanoate = 3-methyl-2-oxobutanoate + H2O. The catalysed reaction is (2R,3R)-2,3-dihydroxy-3-methylpentanoate = (S)-3-methyl-2-oxopentanoate + H2O. It participates in amino-acid biosynthesis; L-isoleucine biosynthesis; L-isoleucine from 2-oxobutanoate: step 3/4. It functions in the pathway amino-acid biosynthesis; L-valine biosynthesis; L-valine from pyruvate: step 3/4. In terms of biological role, functions in the biosynthesis of branched-chain amino acids. Catalyzes the dehydration of (2R,3R)-2,3-dihydroxy-3-methylpentanoate (2,3-dihydroxy-3-methylvalerate) into 2-oxo-3-methylpentanoate (2-oxo-3-methylvalerate) and of (2R)-2,3-dihydroxy-3-methylbutanoate (2,3-dihydroxyisovalerate) into 2-oxo-3-methylbutanoate (2-oxoisovalerate), the penultimate precursor to L-isoleucine and L-valine, respectively. The polypeptide is Dihydroxy-acid dehydratase (Pyrococcus furiosus (strain ATCC 43587 / DSM 3638 / JCM 8422 / Vc1)).